Consider the following 274-residue polypeptide: Beta-lysine N(6)-acetyltransferase (274 aa).

The N-acetyltransferase domain occupies 123-274; it reads FHLKIANETD…DMNFWYKLSE (152 aa).

The protein belongs to the acetyltransferase family.

The catalysed reaction is (3S)-3,6-diaminohexanoate + acetyl-CoA = (3S)-6-acetamido-3-aminohexanoate + CoA + H(+). In terms of biological role, catalyzes the acetylation of beta-lysine to N6-acetyl-beta-lysine, a compatible solute produced by methanogenic archaea that helps cells to cope with salt stress. The protein is Beta-lysine N(6)-acetyltransferase of Methanococcus maripaludis (strain DSM 14266 / JCM 13030 / NBRC 101832 / S2 / LL).